The sequence spans 92 residues: uncharacterized protein (92 aa).

Helical transmembrane passes span Gly-34–Gly-54 and Leu-65–Val-85.

It localises to the cell membrane. This is an uncharacterized protein from Bacillus anthracis.